A 61-amino-acid polypeptide reads, in one-letter code: Large ribosomal subunit protein uL30 (61 aa).

It belongs to the universal ribosomal protein uL30 family. As to quaternary structure, part of the 50S ribosomal subunit.

The polypeptide is Large ribosomal subunit protein uL30 (Legionella pneumophila (strain Paris)).